The sequence spans 78 residues: D-alanyl carrier protein (78 aa).

A Carrier domain is found at 1-78 (MDFKQEVLDV…NIVNQLSELK (78 aa)). At Ser36 the chain carries O-(pantetheine 4'-phosphoryl)serine.

Belongs to the DltC family. Post-translationally, 4'-phosphopantetheine is transferred from CoA to a specific serine of apo-DCP.

It is found in the cytoplasm. It functions in the pathway cell wall biogenesis; lipoteichoic acid biosynthesis. In terms of biological role, carrier protein involved in the D-alanylation of lipoteichoic acid (LTA). The loading of thioester-linked D-alanine onto DltC is catalyzed by D-alanine--D-alanyl carrier protein ligase DltA. The DltC-carried D-alanyl group is further transferred to cell membrane phosphatidylglycerol (PG) by forming an ester bond, probably catalyzed by DltD. D-alanylation of LTA plays an important role in modulating the properties of the cell wall in Gram-positive bacteria, influencing the net charge of the cell wall. The sequence is that of D-alanyl carrier protein from Bacillus subtilis (strain 168).